Reading from the N-terminus, the 781-residue chain is Sialidase (781 aa).

Residues 1-24 form the signal peptide; the sequence is MRFKNVKKTALMLAMFGMATSSNA. Residue R224 coordinates substrate. D250 acts as the Proton acceptor in catalysis. BNR repeat units follow at residues 263–274 and 585–596; these read RTSRDGGITWDT and IYSDDGGSNWQT. Residue E619 is part of the active site. R635 contributes to the substrate binding site. Residues 653-664 form a BNR 3 repeat; the sequence is FLSKDGGITWSL. Residue R712 participates in substrate binding. The stretch at 718 to 729 is one BNR 4 repeat; sequence WFSFDEGVTWKG. The active-site Nucleophile is Y740.

This sequence belongs to the glycosyl hydrolase 33 family. In terms of assembly, monomer. It depends on Ca(2+) as a cofactor.

The protein localises to the secreted. It carries out the reaction Hydrolysis of alpha-(2-&gt;3)-, alpha-(2-&gt;6)-, alpha-(2-&gt;8)- glycosidic linkages of terminal sialic acid residues in oligosaccharides, glycoproteins, glycolipids, colominic acid and synthetic substrates.. Functionally, cleaves the terminal sialic acid (N-acetyl neuraminic acid) from carbohydrate chains in glycoproteins providing free sialic acid which can be used as carbon and energy sources. Sialidases have been suggested to be pathogenic factors in microbial infections. Facilitates cholera toxin binding to host intestinal epithelial cells by converting cell surface polysialogangliosides to GM1 monogangliosides. This chain is Sialidase (nanH), found in Vibrio cholerae serotype O1 (strain ATCC 39541 / Classical Ogawa 395 / O395).